Here is a 513-residue protein sequence, read N- to C-terminus: Glutamate--tRNA ligase 2 (513 aa).

A 'HIGH' region motif is present at residues 11–21 (PSPSGFLHIGS). Positions 240-244 (KLSKR) match the 'KMSKS' region motif. Position 243 (K243) interacts with ATP.

The protein belongs to the class-I aminoacyl-tRNA synthetase family. Glutamate--tRNA ligase type 1 subfamily. As to quaternary structure, monomer.

The protein resides in the cytoplasm. It catalyses the reaction tRNA(Glu) + L-glutamate + ATP = L-glutamyl-tRNA(Glu) + AMP + diphosphate. Functionally, catalyzes the attachment of glutamate to tRNA(Glu) in a two-step reaction: glutamate is first activated by ATP to form Glu-AMP and then transferred to the acceptor end of tRNA(Glu). This Rickettsia massiliae (strain Mtu5) protein is Glutamate--tRNA ligase 2.